The chain runs to 288 residues: Lipoyl synthase (288 aa).

[4Fe-4S] cluster-binding residues include Cys42, Cys47, Cys53, Cys68, Cys72, Cys75, and Ser280. Residues 54-269 (WGEGTATFMI…EKYGIELGFR (216 aa)) form the Radical SAM core domain.

This sequence belongs to the radical SAM superfamily. Lipoyl synthase family. [4Fe-4S] cluster serves as cofactor.

It is found in the cytoplasm. It carries out the reaction [[Fe-S] cluster scaffold protein carrying a second [4Fe-4S](2+) cluster] + N(6)-octanoyl-L-lysyl-[protein] + 2 oxidized [2Fe-2S]-[ferredoxin] + 2 S-adenosyl-L-methionine + 4 H(+) = [[Fe-S] cluster scaffold protein] + N(6)-[(R)-dihydrolipoyl]-L-lysyl-[protein] + 4 Fe(3+) + 2 hydrogen sulfide + 2 5'-deoxyadenosine + 2 L-methionine + 2 reduced [2Fe-2S]-[ferredoxin]. It participates in protein modification; protein lipoylation via endogenous pathway; protein N(6)-(lipoyl)lysine from octanoyl-[acyl-carrier-protein]: step 2/2. Functionally, catalyzes the radical-mediated insertion of two sulfur atoms into the C-6 and C-8 positions of the octanoyl moiety bound to the lipoyl domains of lipoate-dependent enzymes, thereby converting the octanoylated domains into lipoylated derivatives. The chain is Lipoyl synthase from Flavobacterium johnsoniae (strain ATCC 17061 / DSM 2064 / JCM 8514 / BCRC 14874 / CCUG 350202 / NBRC 14942 / NCIMB 11054 / UW101) (Cytophaga johnsonae).